A 215-amino-acid polypeptide reads, in one-letter code: DNA repair and recombination protein RadB (215 aa).

The protein belongs to the eukaryotic RecA-like protein family. RadB subfamily.

In terms of biological role, involved in DNA repair and in homologous recombination. May regulate the cleavage reactions of the branch-structured DNA. Has a very weak ATPase activity that is not stimulated by DNA. Binds DNA but does not promote DNA strands exchange. The protein is DNA repair and recombination protein RadB of Methanococcus maripaludis (strain C7 / ATCC BAA-1331).